A 176-amino-acid chain; its full sequence is Inorganic pyrophosphatase (176 aa).

The substrate site is built by lysine 31, arginine 45, and tyrosine 57. Residues aspartate 67, aspartate 72, and aspartate 104 each contribute to the Mg(2+) site. Tyrosine 141 is a substrate binding site.

Belongs to the PPase family. As to quaternary structure, homohexamer. Mg(2+) serves as cofactor.

The protein localises to the cytoplasm. The enzyme catalyses diphosphate + H2O = 2 phosphate + H(+). In terms of biological role, catalyzes the hydrolysis of inorganic pyrophosphate (PPi) forming two phosphate ions. This is Inorganic pyrophosphatase from Methanopyrus kandleri (strain AV19 / DSM 6324 / JCM 9639 / NBRC 100938).